A 32-amino-acid polypeptide reads, in one-letter code: Photosystem II reaction center protein Z (32 aa).

Residues 12–32 (FGAAAWIGLVLLVGTLYYFVV) traverse the membrane as a helical segment.

The protein belongs to the PsbZ family. As to quaternary structure, PSII is composed of 1 copy each of membrane proteins PsbA, PsbB, PsbC, PsbD, PsbE, PsbF, PsbH, PsbI, PsbJ, PsbK, PsbL, PsbM, PsbT, PsbY, PsbZ, Psb30/Ycf12, at least 3 peripheral proteins of the oxygen-evolving complex and a large number of cofactors. It forms dimeric complexes.

Its subcellular location is the plastid. The protein resides in the chloroplast thylakoid membrane. Functionally, may control the interaction of photosystem II (PSII) cores with the light-harvesting antenna, regulates electron flow through the 2 photosystem reaction centers. PSII is a light-driven water plastoquinone oxidoreductase, using light energy to abstract electrons from H(2)O, generating a proton gradient subsequently used for ATP formation. The polypeptide is Photosystem II reaction center protein Z (Euglena granulata).